The sequence spans 1092 residues: Isoleucine--tRNA ligase (1092 aa).

Positions 53–63 (PFANGLPHYGH) match the 'HIGH' region motif. The 'KMSKS' region signature appears at 613-617 (KLSKR). K616 lines the ATP pocket.

This sequence belongs to the class-I aminoacyl-tRNA synthetase family. IleS type 2 subfamily. As to quaternary structure, monomer. Zn(2+) is required as a cofactor.

The protein resides in the cytoplasm. The catalysed reaction is tRNA(Ile) + L-isoleucine + ATP = L-isoleucyl-tRNA(Ile) + AMP + diphosphate. In terms of biological role, catalyzes the attachment of isoleucine to tRNA(Ile). As IleRS can inadvertently accommodate and process structurally similar amino acids such as valine, to avoid such errors it has two additional distinct tRNA(Ile)-dependent editing activities. One activity is designated as 'pretransfer' editing and involves the hydrolysis of activated Val-AMP. The other activity is designated 'posttransfer' editing and involves deacylation of mischarged Val-tRNA(Ile). This chain is Isoleucine--tRNA ligase, found in Rickettsia africae (strain ESF-5).